The sequence spans 393 residues: Dihydrolipoyllysine-residue succinyltransferase component of 2-oxoglutarate dehydrogenase complex (393 aa).

The Lipoyl-binding domain maps to 3–78 (RINILVPDLP…KSNQILGNIV (76 aa)). Lysine 44 carries the post-translational modification N6-lipoyllysine. Catalysis depends on residues histidine 364 and aspartate 368.

This sequence belongs to the 2-oxoacid dehydrogenase family. In terms of assembly, forms a 24-polypeptide structural core with octahedral symmetry. Part of the 2-oxoglutarate dehydrogenase (OGDH) complex composed of E1 (2-oxoglutarate dehydrogenase), E2 (dihydrolipoamide succinyltransferase) and E3 (dihydrolipoamide dehydrogenase); the complex contains multiple copies of the three enzymatic components (E1, E2 and E3). Requires (R)-lipoate as cofactor.

The enzyme catalyses N(6)-[(R)-dihydrolipoyl]-L-lysyl-[protein] + succinyl-CoA = N(6)-[(R)-S(8)-succinyldihydrolipoyl]-L-lysyl-[protein] + CoA. The protein operates within amino-acid degradation; L-lysine degradation via saccharopine pathway; glutaryl-CoA from L-lysine: step 6/6. E2 component of the 2-oxoglutarate dehydrogenase (OGDH) complex which catalyzes the second step in the conversion of 2-oxoglutarate to succinyl-CoA and CO(2). The sequence is that of Dihydrolipoyllysine-residue succinyltransferase component of 2-oxoglutarate dehydrogenase complex (sucB) from Buchnera aphidicola subsp. Schizaphis graminum (strain Sg).